A 289-amino-acid polypeptide reads, in one-letter code: ADP-polyphosphate phosphotransferase (289 aa).

This sequence belongs to the polyphosphate kinase 2 (PPK2) family. Class I subfamily.

The catalysed reaction is [phosphate](n) + ATP = [phosphate](n+1) + ADP. Functionally, uses inorganic polyphosphate (polyP) as a donor to convert ADP to ATP. The polypeptide is ADP-polyphosphate phosphotransferase (Rhodopseudomonas palustris (strain ATCC BAA-98 / CGA009)).